Reading from the N-terminus, the 213-residue chain is Large ribosomal subunit protein uL3 (213 aa).

Residue Gln151 is modified to N5-methylglutamine.

Belongs to the universal ribosomal protein uL3 family. As to quaternary structure, part of the 50S ribosomal subunit. Forms a cluster with proteins L14 and L19. Post-translationally, methylated by PrmB.

Functionally, one of the primary rRNA binding proteins, it binds directly near the 3'-end of the 23S rRNA, where it nucleates assembly of the 50S subunit. This chain is Large ribosomal subunit protein uL3, found in Rhizobium etli (strain ATCC 51251 / DSM 11541 / JCM 21823 / NBRC 15573 / CFN 42).